A 439-amino-acid chain; its full sequence is CBL-interacting serine/threonine-protein kinase 26 (439 aa).

A Protein kinase domain is found at 13-268 (YEVGKTLGQG…IPEVLGDAWF (256 aa)). ATP contacts are provided by residues 19–27 (LGQGTFAKV) and Lys-42. Asp-136 functions as the Proton acceptor in the catalytic mechanism. The segment at 154-183 (DFGLSALSRQVRGDGLLHTACGTPNYAAPE) is activation loop. Residue Ser-158 is modified to Phosphoserine. Thr-172 carries the post-translational modification Phosphothreonine. In terms of domain architecture, NAF spans 306-330 (EQPTSMNAFELISMSRALDLGNLFE). The interval 336 to 365 (KRETRFAAKGAANDLVQKIEEASKPLGFDI) is PPI.

The protein belongs to the protein kinase superfamily. CAMK Ser/Thr protein kinase family. SNF1 subfamily. Interacts with RBOHF (via N-terminus). Requires Mn(2+) as cofactor.

It localises to the cell membrane. It carries out the reaction L-seryl-[protein] + ATP = O-phospho-L-seryl-[protein] + ADP + H(+). It catalyses the reaction L-threonyl-[protein] + ATP = O-phospho-L-threonyl-[protein] + ADP + H(+). CIPK serine-threonine protein kinases interact with CBL proteins. Binding of a CBL protein to the regulatory NAF domain of CIPK protein lead to the activation of the kinase in a calcium-dependent manner. Involved in the calcium-dependent regulation of reactive oxygen species production by the NADPH oxidase RBOHF. This is CBL-interacting serine/threonine-protein kinase 26 (CIPK26) from Arabidopsis thaliana (Mouse-ear cress).